The chain runs to 70 residues: ATP synthase subunit c (70 aa).

2 consecutive transmembrane segments (helical) span residues 3-23 (ALAA…IGIA) and 44-64 (LFLI…VIAF).

The protein belongs to the ATPase C chain family. In terms of assembly, F-type ATPases have 2 components, F(1) - the catalytic core - and F(0) - the membrane proton channel. F(1) has five subunits: alpha(3), beta(3), gamma(1), delta(1), epsilon(1). F(0) has three main subunits: a(1), b(2) and c(10-14). The alpha and beta chains form an alternating ring which encloses part of the gamma chain. F(1) is attached to F(0) by a central stalk formed by the gamma and epsilon chains, while a peripheral stalk is formed by the delta and b chains.

Its subcellular location is the cell membrane. In terms of biological role, f(1)F(0) ATP synthase produces ATP from ADP in the presence of a proton or sodium gradient. F-type ATPases consist of two structural domains, F(1) containing the extramembraneous catalytic core and F(0) containing the membrane proton channel, linked together by a central stalk and a peripheral stalk. During catalysis, ATP synthesis in the catalytic domain of F(1) is coupled via a rotary mechanism of the central stalk subunits to proton translocation. Functionally, key component of the F(0) channel; it plays a direct role in translocation across the membrane. A homomeric c-ring of between 10-14 subunits forms the central stalk rotor element with the F(1) delta and epsilon subunits. This chain is ATP synthase subunit c, found in Caldicellulosiruptor bescii (strain ATCC BAA-1888 / DSM 6725 / KCTC 15123 / Z-1320) (Anaerocellum thermophilum).